Consider the following 56-residue polypeptide: Small ribosomal subunit protein uS14 (56 aa).

Zn(2+) contacts are provided by C21, C24, C39, and C42.

The protein belongs to the universal ribosomal protein uS14 family. The cofactor is Zn(2+).

The polypeptide is Small ribosomal subunit protein uS14 (RPS29) (Debaryomyces hansenii (strain ATCC 36239 / CBS 767 / BCRC 21394 / JCM 1990 / NBRC 0083 / IGC 2968) (Yeast)).